Reading from the N-terminus, the 569-residue chain is 3-(3-hydroxy-phenyl)propionate/3-hydroxycinnamic acid hydroxylase (569 aa).

FAD contacts are provided by residues 8 to 37 and 273 to 283; these read DVVI…VVDE and FREGRLMLAGD.

Belongs to the PheA/TfdB FAD monooxygenase family. FAD serves as cofactor.

It catalyses the reaction 3-(3-hydroxyphenyl)propanoate + NADH + O2 + H(+) = 3-(2,3-dihydroxyphenyl)propanoate + NAD(+) + H2O. The catalysed reaction is (2E)-3-(3-hydroxyphenyl)prop-2-enoate + NADH + O2 + H(+) = (2E)-3-(2,3-dihydroxyphenyl)prop-2-enoate + NAD(+) + H2O. The protein operates within aromatic compound metabolism; 3-phenylpropanoate degradation. Catalyzes the insertion of one atom of molecular oxygen into position 2 of the phenyl ring of 3-(3-hydroxyphenyl)propionate (3-HPP) and hydroxycinnamic acid (3HCI). The polypeptide is 3-(3-hydroxy-phenyl)propionate/3-hydroxycinnamic acid hydroxylase (Mycolicibacterium gilvum (strain PYR-GCK) (Mycobacterium gilvum (strain PYR-GCK))).